A 260-amino-acid chain; its full sequence is Dolichol-phosphate mannosyltransferase subunit 1 (260 aa).

A2 is modified (N-acetylalanine). A phosphoserine mark is found at S3 and S9. 11 residues coordinate GDP-alpha-D-mannose: P32, Y34, E36, I63, D65, D118, A119, D120, R147, R234, and K240. D120 provides a ligand contact to Mg(2+). D120 is a binding site for Mn(2+).

This sequence belongs to the glycosyltransferase 2 family. In terms of assembly, component of the dolichol-phosphate mannose (DPM) synthase complex composed of DPM1, DPM2 and DPM3; within the complex, directly interacts with DPM3. This interaction stabilizes DPM1. Mg(2+) serves as cofactor. It depends on Mn(2+) as a cofactor. The cofactor is Ca(2+).

It localises to the endoplasmic reticulum. The enzyme catalyses a di-trans,poly-cis-dolichyl phosphate + GDP-alpha-D-mannose = a di-trans,poly-cis-dolichyl beta-D-mannosyl phosphate + GDP. It participates in protein modification; protein glycosylation. Functionally, transfers mannose from GDP-mannose to dolichol monophosphate to form dolichol phosphate mannose (Dol-P-Man) which is the mannosyl donor in pathways leading to N-glycosylation, glycosyl phosphatidylinositol membrane anchoring, and O-mannosylation of proteins; catalytic subunit of the dolichol-phosphate mannose (DPM) synthase complex. The sequence is that of Dolichol-phosphate mannosyltransferase subunit 1 (DPM1) from Homo sapiens (Human).